We begin with the raw amino-acid sequence, 83 residues long: Arminin 4364 (83 aa).

The signal sequence occupies residues 1–18; that stretch reads MKTVFAILFLAFIALTYA. Positions 19 to 55 are excised as a propeptide; the sequence is RSYEDVKEEIKNEVEKEILEDLEKETDELNERKINDA. Valine 80 carries the valine amide modification.

Belongs to the arminin family. Expressed in entodermal epithelium along the body column.

Its subcellular location is the secreted. It is found in the target cell membrane. In terms of biological role, antimicrobial peptide with a broad-spectrum antimicrobial activity. Keeps its antibacterial activity under a wide range of salt concentrations that mimic physiological conditions of human blood, which is surprising, since Hydra is an obligate freshwater animal with nearly no salt tolerance. Does not affect red blood cells. The polypeptide is Arminin 4364 (Hydra vulgaris (Hydra)).